The sequence spans 177 residues: ATP synthase subunit delta (177 aa).

This sequence belongs to the ATPase delta chain family. As to quaternary structure, F-type ATPases have 2 components, F(1) - the catalytic core - and F(0) - the membrane proton channel. F(1) has five subunits: alpha(3), beta(3), gamma(1), delta(1), epsilon(1). F(0) has three main subunits: a(1), b(2) and c(10-14). The alpha and beta chains form an alternating ring which encloses part of the gamma chain. F(1) is attached to F(0) by a central stalk formed by the gamma and epsilon chains, while a peripheral stalk is formed by the delta and b chains.

Its subcellular location is the cell inner membrane. In terms of biological role, f(1)F(0) ATP synthase produces ATP from ADP in the presence of a proton or sodium gradient. F-type ATPases consist of two structural domains, F(1) containing the extramembraneous catalytic core and F(0) containing the membrane proton channel, linked together by a central stalk and a peripheral stalk. During catalysis, ATP synthesis in the catalytic domain of F(1) is coupled via a rotary mechanism of the central stalk subunits to proton translocation. This protein is part of the stalk that links CF(0) to CF(1). It either transmits conformational changes from CF(0) to CF(1) or is implicated in proton conduction. This is ATP synthase subunit delta from Herminiimonas arsenicoxydans.